Here is a 280-residue protein sequence, read N- to C-terminus: Large ribosomal subunit protein uL2 (280 aa).

Disordered regions lie at residues 33-55 (LTEG…RRRG) and 199-266 (DNSN…KASQ). The segment covering 209–219 (GRMRHKGKRPS) has biased composition (basic residues).

It belongs to the universal ribosomal protein uL2 family. In terms of assembly, part of the 50S ribosomal subunit. Forms a bridge to the 30S subunit in the 70S ribosome.

In terms of biological role, one of the primary rRNA binding proteins. Required for association of the 30S and 50S subunits to form the 70S ribosome, for tRNA binding and peptide bond formation. It has been suggested to have peptidyltransferase activity; this is somewhat controversial. Makes several contacts with the 16S rRNA in the 70S ribosome. The sequence is that of Large ribosomal subunit protein uL2 from Ruegeria sp. (strain TM1040) (Silicibacter sp.).